Here is a 93-residue protein sequence, read N- to C-terminus: U12-lycotoxin-Ls1c (93 aa).

Residues 1 to 18 (MKFAVILLFSLVVLAVAS) form the signal peptide. A propeptide spanning residues 19 to 38 (ESVEEVRREIDIEDLPEQQR) is cleaved from the precursor.

Belongs to the neurotoxin 31 family. Contains 5 disulfide bonds. In terms of tissue distribution, expressed by the venom gland.

Its subcellular location is the secreted. In Lycosa singoriensis (Wolf spider), this protein is U12-lycotoxin-Ls1c.